The sequence spans 327 residues: L-lactate dehydrogenase (327 aa).

NAD(+) contacts are provided by residues valine 18, aspartate 39, lysine 44, tyrosine 69, and 83-84 (GA). Substrate-binding positions include glutamine 86, arginine 92, and 124–127 (NPVD). NAD(+) is bound by residues 122–124 (AAN) and serine 147. Position 152 to 155 (152 to 155 (DSAR)) interacts with substrate. Arginine 157 and histidine 172 together coordinate beta-D-fructose 1,6-bisphosphate. Residue histidine 179 is the Proton acceptor of the active site. Residue tyrosine 224 is modified to Phosphotyrosine. Threonine 233 provides a ligand contact to substrate.

The protein belongs to the LDH/MDH superfamily. LDH family. In terms of assembly, homotetramer.

It is found in the cytoplasm. It catalyses the reaction (S)-lactate + NAD(+) = pyruvate + NADH + H(+). The protein operates within fermentation; pyruvate fermentation to lactate; (S)-lactate from pyruvate: step 1/1. Allosterically activated by fructose 1,6-bisphosphate (FBP). Its function is as follows. Catalyzes the conversion of lactate to pyruvate. This chain is L-lactate dehydrogenase, found in Streptococcus equi subsp. equi (strain 4047).